The following is a 1289-amino-acid chain: Ethylene-insensitive protein 2.1 (1289 aa).

The next 5 helical transmembrane spans lie at 18-38 (LLPA…PGKW), 48-68 (FGFD…LCQY), 96-116 (FLGV…ILGI), 128-148 (LSTC…FATL), and 155-175 (SFLC…GVLI). Asparagine 185 carries an N-linked (GlcNAc...) asparagine glycan. The chain crosses the membrane as a helical span at residues 199–219 (LMSLLGASIMPHNFFLHSAIV). Asparagine 227 carries N-linked (GlcNAc...) asparagine glycosylation. Transmembrane regions (helical) follow at residues 235–255 (LNHF…NFVL), 260–280 (ANVF…MSLM), 288–308 (VAPF…AFSW), 335–355 (IIAV…GIYQ), 356–376 (LLIL…IPLF), 393–413 (FLEF…IIFV), and 439–459 (YIVL…LAAT). N-linked (GlcNAc...) asparagine glycosylation is present at asparagine 521. The tract at residues 611–659 (LHTEKEDDEGDNWEPEDSSKGVPGSTLSLTSDGPGSFRSLSGKSDAGGN) is disordered. Residues 616-626 (EDDEGDNWEPE) are compositionally biased toward acidic residues. Positions 635 to 652 (STLSLTSDGPGSFRSLSG) are enriched in polar residues. A phosphoserine mark is found at serine 646 and serine 663. Asparagine 745 carries an N-linked (GlcNAc...) asparagine glycan. Residues 792–816 (SIADSSERRYSGVRTPPSSDGWDNQ) form a disordered region. Residues 807 to 816 (PPSSDGWDNQ) show a composition bias toward polar residues. Position 819 is a phosphothreonine (threonine 819). Phosphoserine is present on serine 923. Asparagine 1025 carries N-linked (GlcNAc...) asparagine glycosylation. Residues 1208-1227 (HRSSPPASNGMLPPASKPGR) are disordered. The Nuclear localization signal motif lies at 1274–1281 (LKRYKRRL).

Belongs to the NRAMP (TC 2.A.55) family.

It is found in the endoplasmic reticulum membrane. The protein localises to the nucleus. Its subcellular location is the cytoplasm. Central factor in signaling pathways regulated by ethylene (ET) and involved in various processes including development, plant defense, senescence, nucleotide sugar flux, and tropisms. Functionally, trafficking signal inducing ethylene response. The nuclear localization is both necessary and sufficient to activate EIN3-mediated transcription and ethylene responses. The polypeptide is Ethylene-insensitive protein 2.1 (Populus trichocarpa (Western balsam poplar)).